Consider the following 79-residue polypeptide: RNA-binding protein Hfq (79 aa).

Residues 10 to 69 enclose the Sm domain; sequence DPFLNALRKEHVPVSIYLVNGIKLQGNIESFDQYVVLLRNTVTQMVYKHAISTVVPARAV.

The protein belongs to the Hfq family. Homohexamer.

Its function is as follows. RNA chaperone that binds small regulatory RNA (sRNAs) and mRNAs to facilitate mRNA translational regulation in response to envelope stress, environmental stress and changes in metabolite concentrations. Also binds with high specificity to tRNAs. This chain is RNA-binding protein Hfq, found in Ralstonia nicotianae (strain ATCC BAA-1114 / GMI1000) (Ralstonia solanacearum).